The sequence spans 315 residues: Thioredoxin reductase (315 aa).

Residue 34 to 41 participates in FAD binding; sequence EGMKVGGQ. Cysteine 134 and cysteine 137 are oxidised to a cystine. FAD is bound at residue 282 to 291; the sequence is DIRVKSLRQV.

The protein belongs to the class-II pyridine nucleotide-disulfide oxidoreductase family. In terms of assembly, homodimer. It depends on FAD as a cofactor.

It localises to the cytoplasm. It catalyses the reaction [thioredoxin]-dithiol + NADP(+) = [thioredoxin]-disulfide + NADPH + H(+). The polypeptide is Thioredoxin reductase (trxB) (Peptoclostridium litorale (Clostridium litorale)).